Consider the following 172-residue polypeptide: Large ribosomal subunit protein uL10 (172 aa).

The protein belongs to the universal ribosomal protein uL10 family. In terms of assembly, part of the ribosomal stalk of the 50S ribosomal subunit. The N-terminus interacts with L11 and the large rRNA to form the base of the stalk. The C-terminus forms an elongated spine to which L12 dimers bind in a sequential fashion forming a multimeric L10(L12)X complex.

Functionally, forms part of the ribosomal stalk, playing a central role in the interaction of the ribosome with GTP-bound translation factors. This Pelodictyon phaeoclathratiforme (strain DSM 5477 / BU-1) protein is Large ribosomal subunit protein uL10.